We begin with the raw amino-acid sequence, 410 residues long: Zinc finger TRAF-type-containing protein 1 (410 aa).

A compositionally biased stretch (gly residues) spans 1 to 13 (MSGAEEAGGGGPA). Positions 1-22 (MSGAEEAGGGGPAAGPAGSVPA) are disordered. An RING-type; degenerate zinc finger spans residues 117-162 (CTVCLDLPKASVYQCTNGHLMCAGCFIHLLADARLKEEQATCPNCR). The segment at 158 to 231 (CPNCRCEISK…PWHGPFHELT (74 aa)) adopts a TRAF-type zinc-finger fold.

This sequence belongs to the ZFTRAF1 family. Interacts with LGALS3.

The protein localises to the cytoplasm. It localises to the perinuclear region. The chain is Zinc finger TRAF-type-containing protein 1 from Bos taurus (Bovine).